A 542-amino-acid chain; its full sequence is Protein lin-9 homolog (542 aa).

An N-acetylalanine modification is found at alanine 2. The sufficient for interaction with RB1 stretch occupies residues 2–296 (AELDQLPDES…QKQRPSRFFM (295 aa)). Residue lysine 21 forms a Glycyl lysine isopeptide (Lys-Gly) (interchain with G-Cter in SUMO2) linkage. 2 positions are modified to phosphoserine: serine 65 and serine 95. Residues threonine 96 and threonine 304 each carry the phosphothreonine modification. Serine 309 and serine 321 each carry phosphoserine. The stretch at 355–413 (IKKEHIKKLREMNTDAEKLKSYSMPISIEFQRRYATIVLELEQLNKDLNKVLHKVQQYC) forms a coiled coil.

Belongs to the lin-9 family. Component of the DREAM complex (also named LINC complex) at least composed of E2F4, E2F5, LIN9, LIN37, LIN52, LIN54, MYBL1, MYBL2, RBL1, RBL2, RBBP4, TFDP1 and TFDP2. The complex exists in quiescent cells where it represses cell cycle-dependent genes. It dissociates in S phase when LIN9, LIN37, LIN52 and LIN54 form a subcomplex that binds to MYBL2. Interacts with RB1.

It localises to the nucleus. The protein localises to the nucleoplasm. Acts as a tumor suppressor. Inhibits DNA synthesis. Its ability to inhibit oncogenic transformation is mediated through its association with RB1. Plays a role in the expression of genes required for the G1/S transition. This Macaca fascicularis (Crab-eating macaque) protein is Protein lin-9 homolog (LIN9).